A 148-amino-acid chain; its full sequence is Large ribosomal subunit protein uL15 (148 aa).

Residues 1 to 61 are disordered; the sequence is MKINDLKPAP…GGQMPLQRRV (61 aa).

This sequence belongs to the universal ribosomal protein uL15 family. As to quaternary structure, part of the 50S ribosomal subunit.

Binds to the 23S rRNA. The sequence is that of Large ribosomal subunit protein uL15 from Thermodesulfovibrio yellowstonii (strain ATCC 51303 / DSM 11347 / YP87).